Reading from the N-terminus, the 313-residue chain is Porphobilinogen deaminase (313 aa).

C241 bears the S-(dipyrrolylmethanemethyl)cysteine mark.

Belongs to the HMBS family. As to quaternary structure, monomer. Requires dipyrromethane as cofactor.

The enzyme catalyses 4 porphobilinogen + H2O = hydroxymethylbilane + 4 NH4(+). It functions in the pathway porphyrin-containing compound metabolism; protoporphyrin-IX biosynthesis; coproporphyrinogen-III from 5-aminolevulinate: step 2/4. The protein operates within porphyrin-containing compound metabolism; chlorophyll biosynthesis. Its function is as follows. Tetrapolymerization of the monopyrrole PBG into the hydroxymethylbilane pre-uroporphyrinogen in several discrete steps. The protein is Porphobilinogen deaminase of Chlorobium phaeovibrioides (strain DSM 265 / 1930) (Prosthecochloris vibrioformis (strain DSM 265)).